We begin with the raw amino-acid sequence, 177 residues long: Bifunctional protein PyrR (177 aa).

The short motif at 97 to 109 (IILVDDVLYTGRT) is the PRPP-binding element.

The protein belongs to the purine/pyrimidine phosphoribosyltransferase family. PyrR subfamily.

It catalyses the reaction UMP + diphosphate = 5-phospho-alpha-D-ribose 1-diphosphate + uracil. Its function is as follows. Regulates the transcription of the pyrimidine nucleotide (pyr) operon in response to exogenous pyrimidines. Also displays a weak uracil phosphoribosyltransferase activity which is not physiologically significant. The polypeptide is Bifunctional protein PyrR (Nitrosococcus oceani (strain ATCC 19707 / BCRC 17464 / JCM 30415 / NCIMB 11848 / C-107)).